The primary structure comprises 338 residues: DNA-directed RNA polymerase subunit alpha (338 aa).

The interval 1–225 (MLISQRPTIT…ELFGLARELN (225 aa)) is alpha N-terminal domain (alpha-NTD). The tract at residues 242–338 (YIAAYSMPIE…YIDVEAEDSE (97 aa)) is alpha C-terminal domain (alpha-CTD). The segment at 319 to 338 (LEGYDAETGGYIDVEAEDSE) is disordered.

The protein belongs to the RNA polymerase alpha chain family. In terms of assembly, homodimer. The RNAP catalytic core consists of 2 alpha, 1 beta, 1 beta' and 1 omega subunit. When a sigma factor is associated with the core the holoenzyme is formed, which can initiate transcription.

The catalysed reaction is RNA(n) + a ribonucleoside 5'-triphosphate = RNA(n+1) + diphosphate. Its function is as follows. DNA-dependent RNA polymerase catalyzes the transcription of DNA into RNA using the four ribonucleoside triphosphates as substrates. The chain is DNA-directed RNA polymerase subunit alpha from Corynebacterium glutamicum (strain ATCC 13032 / DSM 20300 / JCM 1318 / BCRC 11384 / CCUG 27702 / LMG 3730 / NBRC 12168 / NCIMB 10025 / NRRL B-2784 / 534).